Here is a 155-residue protein sequence, read N- to C-terminus: Small ribosomal subunit protein uS9 (155 aa).

Belongs to the universal ribosomal protein uS9 family.

The polypeptide is Small ribosomal subunit protein uS9 (Rhizobium leguminosarum bv. trifolii (strain WSM2304)).